Consider the following 266-residue polypeptide: Integral membrane protein 2B (266 aa).

Over 1-54 (MVKVTFNSALAQKEAKKDEPKSSEEALIVPPDAVAVDCKDPGDVVPVGQRRAWC) the chain is Cytoplasmic. Residues 55–75 (WCMCFGLAFMLAGVILGGAYL) traverse the membrane as a helical; Signal-anchor for type II membrane protein segment. Over 76 to 266 (YKYFALQPDD…KFAVETLICS (191 aa)) the chain is Lumenal. The tract at residues 102–134 (EPSADAPAARYQTIEENIKIFEEDAVEFISVPV) is necessary for interaction with APP and inhibitor effects on APP processing. The 95-residue stretch at 137–231 (FADSDPANIV…LCHDKETYKL (95 aa)) folds into the BRICHOS domain. 2 disulfides stabilise this stretch: cysteine 164–cysteine 223 and cysteine 248–cysteine 265. N-linked (GlcNAc...) asparagine glycosylation occurs at asparagine 170.

It belongs to the ITM2 family. Homodimer; disulfide-linked. Interacts with SPPL2A and SPPL2B. Interacts with APP. Mature BRI2 (mBRI2) interacts with the APP amyloid-beta A4 protein; the interaction occurs at the cell surface and in the endocytic compartments and enable alpha- and beta-secretase-induced APP cleavage inhibition. Mature BRI2 (mBRI2) interacts with the APP C99; the interaction occurs in the endocytic compartments and enable gamma-secretase-induced C99 cleavage inhibition. May form heterodimers with Bri23 peptide and APP amyloid-beta protein 40. Interacts with ADAM7 in sperm; the interaction increases following capacitation. The ectodomain C-terminal part of the imBRI2 is processed by furin producing a secreted Bri23 peptide and a mature BRI2, membrane form (mBRI2). The remaining part of the ectodomain of mBRI2 containing the BRICHOS domain is cleaved by ADAM10 and is secreted (BRI2C, soluble form). The membrane-bound N-terminal fragment (BRI2C, membrane form) is further proteolytically processed by SPPL2A and SPPL2B through regulated intramembrane proteolysis producing a secreted C-peptide and a BRI2 intracellular domain (BRI2 ICD) released in the cytosol. Shedding by ADAM10 facilitates intramembrane cleavage but is not absolutely required for BRI2 ICD generation. Post-translationally, glycosylation at Asn-170 is important for cell surface localization, but doesn't affect furin- and ADAM10-induced proteolytic processing. As to expression, expressed in the brain, testis, testicular sperm, epididymis and mature epididymal sperm (at protein level).

It localises to the golgi apparatus membrane. It is found in the cell membrane. The protein resides in the endosome membrane. The protein localises to the secreted. In terms of biological role, plays a regulatory role in the processing of the amyloid-beta A4 precursor protein (APP) and acts as an inhibitor of the amyloid-beta peptide aggregation and fibrils deposition. Plays a role in the induction of neurite outgrowth. Functions as a protease inhibitor by blocking access of secretases to APP cleavage sites. Functionally, mature BRI2 (mBRI2) functions as a modulator of the amyloid-beta A4 precursor protein (APP) processing leading to a strong reduction in the secretion of secretase-processed amyloid-beta protein 40 and amyloid-beta protein 42. Bri23 peptide prevents aggregation of APP amyloid-beta protein 42 into toxic oligomers. This chain is Integral membrane protein 2B (Itm2b), found in Mus musculus (Mouse).